A 342-amino-acid chain; its full sequence is Dihydroorotase (342 aa).

Zn(2+) contacts are provided by histidine 13 and histidine 15. Substrate-binding positions include 15–17 (HLR) and asparagine 41. Positions 98, 135, and 173 each coordinate Zn(2+). At lysine 98 the chain carries N6-carboxylysine. Histidine 135 contributes to the substrate binding site. Residue leucine 218 participates in substrate binding. A Zn(2+)-binding site is contributed by aspartate 246. Residue aspartate 246 is part of the active site. Residues histidine 250 and alanine 262 each contribute to the substrate site.

The protein belongs to the metallo-dependent hydrolases superfamily. DHOase family. Class II DHOase subfamily. As to quaternary structure, homodimer. Requires Zn(2+) as cofactor.

The enzyme catalyses (S)-dihydroorotate + H2O = N-carbamoyl-L-aspartate + H(+). Its pathway is pyrimidine metabolism; UMP biosynthesis via de novo pathway; (S)-dihydroorotate from bicarbonate: step 3/3. Catalyzes the reversible cyclization of carbamoyl aspartate to dihydroorotate. The sequence is that of Dihydroorotase from Photobacterium profundum (strain SS9).